The sequence spans 123 residues: Guanine nucleotide exchange factor MSS4 (123 aa).

The residue at position 1 (M1) is an N-acetylmethionine. Positions 9 to 123 constitute an MSS4 domain; the sequence is ELVSAEGRNR…YVALERVSHE (115 aa). Positions 23, 26, 94, and 97 each coordinate Zn(2+).

The protein belongs to the DSS4/MSS4 family. As to quaternary structure, interacts with RAB8A. As to expression, ubiquitous.

Its function is as follows. Guanine-nucleotide-releasing protein that acts on members of the SEC4/YPT1/RAB subfamily. Stimulates GDP release from both YPT1, RAB3A and RAB10, but is less active on these proteins than on the SEC4 protein. Might play a general role in vesicular transport. The protein is Guanine nucleotide exchange factor MSS4 (Rabif) of Rattus norvegicus (Rat).